The chain runs to 174 residues: MENMLGLLRLHVIRGVNLAIRDSQSSDPYVIVRMGKQKLRTRVMKKNLNTEWNEDLTLSVTDPTLPVKIMVYDRDRFSRDDKMGDAIFHIDPFLEAIRIQNQLGGLPEGTVIMKIQASRQNCLSEESKIVWHKGKIVQNMFLKLQNVERGEIELQLEWIDVSGALTDDAEDVAF.

Met-1 is modified (N-acetylmethionine). One can recognise a C2 domain in the interval 1–104; that stretch reads MENMLGLLRL…EAIRIQNQLG (104 aa). Ca(2+) contacts are provided by Arg-21, Asp-22, Asp-27, Asp-73, Arg-74, Asp-75, and Asp-81.

It belongs to the plant CAR protein family. Binds to PYR/PYL/RCAR abscisic acid intracellular receptors in an ABA-independent manner, both at the plasma membrane and in the nucleus. The cofactor is Ca(2+).

The protein localises to the cell membrane. It localises to the nucleus. Stimulates the GTPase/ATPase activities of Obg-like ATPases. Mediates the transient calcium-dependent interaction of PYR/PYL/RCAR abscisic acid (ABA) receptors with the plasma membrane and thus regulates ABA sensitivity. The protein is Protein C2-DOMAIN ABA-RELATED 2 of Arabidopsis thaliana (Mouse-ear cress).